A 165-amino-acid polypeptide reads, in one-letter code: Serine/threonine-protein phosphatase 2A 56 kDa regulatory subunit epsilon isoform (165 aa).

The tract at residues 1–41 (MSSAPTTPPSVDKVDGFSRKSVRKARQKRSQSSSQFRSQGK) is disordered. An N-acetylserine modification is found at Ser2. Thr7 carries the phosphothreonine modification. Residues 20–29 (KSVRKARQKR) show a composition bias toward basic residues. Residues Ser30, Ser32, and Ser34 each carry the phosphoserine modification. Low complexity predominate over residues 30-41 (SQSSSQFRSQGK).

The protein belongs to the phosphatase 2A regulatory subunit B56 family. In terms of assembly, PP2A consists of a common heterodimeric core enzyme, composed of a 36 kDa catalytic subunit (subunit C) and a 65 kDa constant regulatory subunit (PR65 or subunit A), that associates with a variety of regulatory subunits. Proteins that associate with the core dimer include three families of regulatory subunits B (the R2/B/PR55/B55, R3/B''/PR72/PR130/PR59 and R5/B'/B56 families), the 48 kDa variable regulatory subunit, viral proteins, and cell signaling molecules. Interacts with SGO1. Found in a complex with at least ARL2, PPP2CB; PPP2R1A, PPP2R2A, PPP2R5E and TBCD. As to expression, highly expressed in testis, lung and brain.

The protein resides in the cytoplasm. In terms of biological role, the B regulatory subunit might modulate substrate selectivity and catalytic activity, and might also direct the localization of the catalytic enzyme to a particular subcellular compartment. The polypeptide is Serine/threonine-protein phosphatase 2A 56 kDa regulatory subunit epsilon isoform (PPP2R5E) (Oryctolagus cuniculus (Rabbit)).